The following is a 239-amino-acid chain: Small ribosomal subunit protein uS2 (239 aa).

The protein belongs to the universal ribosomal protein uS2 family.

This Parasynechococcus marenigrum (strain WH8102) protein is Small ribosomal subunit protein uS2.